A 180-amino-acid polypeptide reads, in one-letter code: ADP-ribosylation factor 4 (180 aa).

G2 is lipidated: N-myristoyl glycine. GTP is bound by residues 24–31 (GLDAAGKT), 67–71 (DVGGQ), and 126–129 (NKQD).

The protein belongs to the small GTPase superfamily. Arf family.

It localises to the golgi apparatus. In terms of biological role, GTP-binding protein involved in protein trafficking; may modulate vesicle budding and uncoating within the Golgi apparatus. May be involved in ciliogenesis. The protein is ADP-ribosylation factor 4 (arf4) of Xenopus laevis (African clawed frog).